The following is a 380-amino-acid chain: Cytochrome b (380 aa).

4 helical membrane-spanning segments follow: residues 34–54, 78–99, 114–134, and 179–199; these read FGSL…LLAM, WLIR…YLHI, WNTG…GYVL, and FFAL…IHLT. Heme b contacts are provided by His84 and His98. The heme b site is built by His183 and His197. Position 202 (His202) interacts with a ubiquinone. 4 consecutive transmembrane segments (helical) span residues 227–247, 289–309, 321–341, and 348–368; these read LKDI…ALFS, LGGV…PLLH, LSQL…WIGS, and FIII…VLFP.

The protein belongs to the cytochrome b family. As to quaternary structure, the cytochrome bc1 complex contains 11 subunits: 3 respiratory subunits (MT-CYB, CYC1 and UQCRFS1), 2 core proteins (UQCRC1 and UQCRC2) and 6 low-molecular weight proteins (UQCRH/QCR6, UQCRB/QCR7, UQCRQ/QCR8, UQCR10/QCR9, UQCR11/QCR10 and a cleavage product of UQCRFS1). This cytochrome bc1 complex then forms a dimer. Requires heme b as cofactor.

Its subcellular location is the mitochondrion inner membrane. Functionally, component of the ubiquinol-cytochrome c reductase complex (complex III or cytochrome b-c1 complex) that is part of the mitochondrial respiratory chain. The b-c1 complex mediates electron transfer from ubiquinol to cytochrome c. Contributes to the generation of a proton gradient across the mitochondrial membrane that is then used for ATP synthesis. This is Cytochrome b (MT-CYB) from Thalassarche impavida (Albatross).